Consider the following 441-residue polypeptide: Capsid protein (441 aa).

The tract at residues 26-63 (DSKKKQPIYQNSSESEESETENKNFIYDFSSEEDFEEP) is disordered. Positions 77–79 (KRK) match the Nuclear localization signal motif. The segment at 381-398 (CQCWLCHEEGHYANECPK) adopts a CCHC-type zinc-finger fold.

It belongs to the caulimoviridae capsid protein family. Interacts (via nuclear localization signal) with host importin alpha.

The protein resides in the virion. It is found in the host nucleus. In terms of biological role, self assembles to form an icosahedral capsid, about 50 nm in diameter, nm, composed of 420 subunits of the viral capsid protein. The capsid encapsulates the genomic dsDNA. Following virus entry into host cell, provides nuclear import of the viral genome. Virus particles do not enter the nucleus, but dock at the nuclear membrane through the interaction with host importins. This is Capsid protein from Soybean chlorotic mottle virus.